We begin with the raw amino-acid sequence, 215 residues long: Ectodysplasin-A receptor-associated adapter protein (215 aa).

Disordered stretches follow at residues 1 to 41 (MGLR…FNMS) and 62 to 86 (LNCP…TGDP). Positions 17–28 (GHQEDHMVKEPV) are enriched in basic and acidic residues. The Death domain maps to 123-202 (DVIRIKLDPC…KVLRRWVDEE (80 aa)).

As to quaternary structure, self-associates and binds EDAR, TRAF1, TRAF2 and TRAF3. Detected in adult pancreas, placenta and fetal skin, and at lower levels in lung, thymus, prostate and testis.

The protein localises to the cytoplasm. In terms of biological role, adapter protein that interacts with EDAR DEATH domain and couples the receptor to EDA signaling pathway during morphogenesis of ectodermal organs. Mediates the activation of NF-kappa-B. The chain is Ectodysplasin-A receptor-associated adapter protein (EDARADD) from Homo sapiens (Human).